A 304-amino-acid chain; its full sequence is Secreted mono- and diacylglycerol lipase MDL3 (304 aa).

The N-terminal stretch at 1-19 is a signal peptide; the sequence is MIVGPVISLLLSYFVLVSG. A disulfide bridge connects residues Cys-55 and Cys-297. An N-linked (GlcNAc...) asparagine glycan is attached at Asn-161. Ser-171 functions as the Nucleophile in the catalytic mechanism. Catalysis depends on residues Asp-228 and His-281.

Belongs to the AB hydrolase superfamily. Lipase family. Class 3 subfamily.

Its subcellular location is the secreted. The protein resides in the cell wall. The enzyme catalyses a monoacylglycerol + H2O = glycerol + a fatty acid + H(+). It catalyses the reaction a diacylglycerol + H2O = a monoacylglycerol + a fatty acid + H(+). Its function is as follows. Secreted lipase involved in Dandruff and seborrheic dermatitis (D/SD) probably via lipase-mediated breakdown of sebaceous lipids and release of irritating free fatty acids. Shows activity against monoglyceride and diglyceride substrates, but not triglyceride substrates and does not exhibit regio-selective production of diacylglycerols. Hydrolyzes distearin, dilinolein, dipalmitoylglycerol and dipalmitolein. Cleaves oleic acid from 1,2 isomers of diolein on both the 1 and the 2 position of the glycerol backbone, resulting mainly in free fatty acids but no monoolein is detected. Shows activity on monoolein and liberates mostly free fatty acids, but can also perform the reverse reaction and produce diolein. The chain is Secreted mono- and diacylglycerol lipase MDL3 from Malassezia globosa (strain ATCC MYA-4612 / CBS 7966) (Dandruff-associated fungus).